A 762-amino-acid chain; its full sequence is Putative BTB/POZ domain-containing protein L272 (762 aa).

The BTB domain maps to 16–86; it reads TDITIILKDE…FYGQKIKSHN (71 aa). Acidic residues predominate over residues 390–410; the sequence is DLDNSNDLNDSNDLDDSDDSN. 2 disordered regions span residues 390 to 411 and 532 to 556; these read DLDN…DSND and ISDN…NSDN. Low complexity predominate over residues 532–543; the sequence is ISDNSDNLNNSD. A coiled-coil region spans residues 737–762; that stretch reads FSENYCDELINRLNNALKKIEQKYPN.

Belongs to the mimivirus BTB/WD family.

The polypeptide is Putative BTB/POZ domain-containing protein L272 (Acanthamoeba polyphaga (Amoeba)).